Reading from the N-terminus, the 608-residue chain is Serine/arginine repetitive matrix protein 4 (608 aa).

2 disordered regions span residues 34–246 and 261–608; these read ASIT…PLPR and SAAD…STRR. Residues 78-100 show a composition bias toward basic and acidic residues; sequence GREKACRELDPARAHSASQDRDP. Basic residues-rich tracts occupy residues 107–123 and 131–187; these read RGKK…RRRS and VKKK…HRCP. Residues 188-200 are compositionally biased toward low complexity; it reads SRSQSSELRSPSC. Over residues 201 to 213 the composition is skewed to basic and acidic residues; the sequence is ESRHRGRSPEEGR. Basic residues predominate over residues 214-228; sequence KSRRTHSRRCSKNHC. The span at 289 to 299 shows a compositional bias: low complexity; sequence TSSPPSTQTSS. Residues 322–339 show a composition bias toward polar residues; it reads CGNTSDSGNSFTTSSPQN. Composition is skewed to low complexity over residues 389 to 420 and 428 to 459; these read RSSS…SRST and SRSP…SRYS. Residues 460-477 show a composition bias toward basic and acidic residues; it reads PSRERDLKYGEKEPQPRE. Residues 478-494 show a composition bias toward basic residues; sequence RARRRRRSYSPMRKRRR. A compositionally biased stretch (basic and acidic residues) spans 495 to 504; sequence DSPSHLEARR. Positions 518 to 555 are enriched in low complexity; the sequence is PSPSSSSSLSSASSWYSSSSSSSSSSSRSPSRSYSRSR. The span at 556-573 shows a compositional bias: basic residues; the sequence is SPSRSHSSRSQTRSRTRT. Low complexity predominate over residues 574–608; that stretch reads SRSSSSRSLSLGSRSRSRNRSLSYSSAESYASTRR.

Belongs to the nSR100 family. In terms of processing, phosphorylated. As to expression, specifically expressed in neuronal cells (at protein level). Expressed in adult nervous system and sensory organ tissues.

The protein localises to the nucleus. Splicing factor specifically required for neural cell differentiation. Acts in conjunction with nPTB/PTBP2 by binding directly to its regulated target transcripts and promotes neural-specific exon inclusion in many genes that function in neural cell differentiation. Required to promote the inclusion of neural-specific exon 10 in nPTB/PTBP2, leading to increased expression of neural-specific nPTB/PTBP2. Also promotes the inclusion of exon 16 in DAAM1 in neuron extracts. Promotes alternative splicing of REST transcripts to produce REST isoform 2 (REST4) with greatly reduced repressive activity, thereby activating expression of REST targets in neural cells. Plays an important role during embryonic development as well as in the proper functioning of the adult nervous system. Regulates alternative splicing events in genes with important neuronal functions. The polypeptide is Serine/arginine repetitive matrix protein 4 (Srrm4) (Mus musculus (Mouse)).